The primary structure comprises 346 residues: tRNA-specific 2-thiouridylase MnmA (346 aa).

ATP is bound at residue 6-13 (AMSGGTDS). Catalysis depends on C90, which acts as the Nucleophile. A disulfide bridge links C90 with C187. G114 contacts ATP. An interaction with tRNA region spans residues 137-139 (KDQ). C187 functions as the Cysteine persulfide intermediate in the catalytic mechanism. An interaction with tRNA region spans residues 292-293 (RY).

This sequence belongs to the MnmA/TRMU family.

The protein resides in the cytoplasm. The enzyme catalyses S-sulfanyl-L-cysteinyl-[protein] + uridine(34) in tRNA + AH2 + ATP = 2-thiouridine(34) in tRNA + L-cysteinyl-[protein] + A + AMP + diphosphate + H(+). Its function is as follows. Catalyzes the 2-thiolation of uridine at the wobble position (U34) of tRNA, leading to the formation of s(2)U34. The protein is tRNA-specific 2-thiouridylase MnmA of Nitratidesulfovibrio vulgaris (strain DP4) (Desulfovibrio vulgaris).